The sequence spans 385 residues: cAMP-dependent protein kinase regulatory subunit (385 aa).

A compositionally biased stretch (polar residues) spans M1–S22. Disordered stretches follow at residues M1–N51 and D77–P111. The segment at M1–F128 is dimerization and phosphorylation. S89 carries the phosphoserine modification. 3',5'-cyclic AMP contacts are provided by residues L129 to P260, E207, R216, I261 to E378, E328, and R337.

This sequence belongs to the cAMP-dependent kinase regulatory chain family. As to quaternary structure, tetramer, composed of 2 regulatory (R) and 2 catalytic (C) subunits. In the presence of cAMP it dissociates into 2 active monomeric C subunits and an R dimer.

The protein is cAMP-dependent protein kinase regulatory subunit (mcb) of Neurospora crassa (strain ATCC 24698 / 74-OR23-1A / CBS 708.71 / DSM 1257 / FGSC 987).